The primary structure comprises 387 residues: tRNA-specific 2-thiouridylase MnmA (387 aa).

Residues 6–13 and leucine 32 each bind ATP; that span reads AMSGGVDS. Residue cysteine 101 is the Nucleophile of the active site. A disulfide bond links cysteine 101 and cysteine 199. Glycine 125 provides a ligand contact to ATP. The interval 148 to 150 is interaction with tRNA; the sequence is KDQ. Catalysis depends on cysteine 199, which acts as the Cysteine persulfide intermediate.

Belongs to the MnmA/TRMU family.

It is found in the cytoplasm. It carries out the reaction S-sulfanyl-L-cysteinyl-[protein] + uridine(34) in tRNA + AH2 + ATP = 2-thiouridine(34) in tRNA + L-cysteinyl-[protein] + A + AMP + diphosphate + H(+). Its function is as follows. Catalyzes the 2-thiolation of uridine at the wobble position (U34) of tRNA, leading to the formation of s(2)U34. In Clavibacter michiganensis subsp. michiganensis (strain NCPPB 382), this protein is tRNA-specific 2-thiouridylase MnmA.